The sequence spans 244 residues: Probable proteasome subunit alpha type-1 (244 aa).

It belongs to the peptidase T1A family. The 26S proteasome consists of a 20S proteasome core and two 19S regulatory subunits. The 20S proteasome core is composed of 28 subunits that are arranged in four stacked rings, resulting in a barrel-shaped structure. The two end rings are each formed by seven alpha subunits, and the two central rings are each formed by seven beta subunits. The catalytic chamber with the active sites is on the inside of the barrel.

The protein resides in the cytoplasm. It is found in the nucleus. Functionally, the proteasome is a multicatalytic proteinase complex which is characterized by its ability to cleave peptides with Arg, Phe, Tyr, Leu, and Glu adjacent to the leaving group at neutral or slightly basic pH. The proteasome has an ATP-dependent proteolytic activity. The protein is Probable proteasome subunit alpha type-1 of Schizosaccharomyces pombe (strain 972 / ATCC 24843) (Fission yeast).